The following is a 78-amino-acid chain: UPF0335 protein RP113 (78 aa).

It belongs to the UPF0335 family.

The protein is UPF0335 protein RP113 of Rickettsia prowazekii (strain Madrid E).